Reading from the N-terminus, the 667-residue chain is DNA ligase (667 aa).

Residues 30-34 (DSEYD), 79-80 (SL), and E112 each bind NAD(+). Catalysis depends on K114, which acts as the N6-AMP-lysine intermediate. NAD(+)-binding residues include R135, E172, K289, and K313. 4 residues coordinate Zn(2+): C407, C410, C425, and C431. The 78-residue stretch at 590 to 667 (VRDNPLKGKT…SENEFLALLA (78 aa)) folds into the BRCT domain.

The protein belongs to the NAD-dependent DNA ligase family. LigA subfamily. The cofactor is Mg(2+). Requires Mn(2+) as cofactor.

It catalyses the reaction NAD(+) + (deoxyribonucleotide)n-3'-hydroxyl + 5'-phospho-(deoxyribonucleotide)m = (deoxyribonucleotide)n+m + AMP + beta-nicotinamide D-nucleotide.. Its function is as follows. DNA ligase that catalyzes the formation of phosphodiester linkages between 5'-phosphoryl and 3'-hydroxyl groups in double-stranded DNA using NAD as a coenzyme and as the energy source for the reaction. It is essential for DNA replication and repair of damaged DNA. The polypeptide is DNA ligase (Histophilus somni (strain 2336) (Haemophilus somnus)).